A 337-amino-acid polypeptide reads, in one-letter code: DNA-directed RNA polymerase subunit alpha (337 aa).

The alpha N-terminal domain (alpha-NTD) stretch occupies residues 1 to 232 (MVREEVRVCT…IDLFIPFLHA (232 aa)). The segment at 266–337 (EISFQCIFID…FAIDLPKNKF (72 aa)) is alpha C-terminal domain (alpha-CTD).

It belongs to the RNA polymerase alpha chain family. In terms of assembly, in plastids the minimal PEP RNA polymerase catalytic core is composed of four subunits: alpha, beta, beta', and beta''. When a (nuclear-encoded) sigma factor is associated with the core the holoenzyme is formed, which can initiate transcription.

The protein resides in the plastid. It is found in the chloroplast. The catalysed reaction is RNA(n) + a ribonucleoside 5'-triphosphate = RNA(n+1) + diphosphate. In terms of biological role, DNA-dependent RNA polymerase catalyzes the transcription of DNA into RNA using the four ribonucleoside triphosphates as substrates. The chain is DNA-directed RNA polymerase subunit alpha from Buxus microphylla (Littleleaf boxwood).